A 241-amino-acid chain; its full sequence is Uridylate kinase (241 aa).

15 to 18 (KLSG) is a binding site for ATP. Gly-57 is a UMP binding site. 2 residues coordinate ATP: Gly-58 and Arg-62. UMP-binding positions include Asp-77 and 139-146 (IGHTLFTT). ATP is bound by residues Thr-166, Asn-167, Phe-172, and Asp-175.

The protein belongs to the UMP kinase family. As to quaternary structure, homohexamer.

It localises to the cytoplasm. The catalysed reaction is UMP + ATP = UDP + ADP. It participates in pyrimidine metabolism; CTP biosynthesis via de novo pathway; UDP from UMP (UMPK route): step 1/1. With respect to regulation, inhibited by UTP. Functionally, catalyzes the reversible phosphorylation of UMP to UDP. The chain is Uridylate kinase from Wigglesworthia glossinidia brevipalpis.